We begin with the raw amino-acid sequence, 298 residues long: HTH-type transcriptional regulator ArgP (298 aa).

One can recognise an HTH lysR-type domain in the interval 4–60 (LDYKWIEALDAVVYQGSFERAAEHLFVSQSAISQRIKQLEKFLAQPVLIREQPPKPT). The segment at residues 21–40 (FERAAEHLFVSQSAISQRIK) is a DNA-binding region (H-T-H motif).

It belongs to the LysR transcriptional regulatory family. Homodimer.

Its function is as follows. Controls the transcription of genes involved in arginine and lysine metabolism. In Vibrio parahaemolyticus serotype O3:K6 (strain RIMD 2210633), this protein is HTH-type transcriptional regulator ArgP.